A 790-amino-acid chain; its full sequence is Endonuclease MutS2 (790 aa).

334-341 (GPNTGGKT) contributes to the ATP binding site. In terms of domain architecture, Smr spans 713-788 (LDVRGMTLDD…GDGVTIVELH (76 aa)).

The protein belongs to the DNA mismatch repair MutS family. MutS2 subfamily. Homodimer. Binds to stalled ribosomes, contacting rRNA.

Functionally, endonuclease that is involved in the suppression of homologous recombination and thus may have a key role in the control of bacterial genetic diversity. Its function is as follows. Acts as a ribosome collision sensor, splitting the ribosome into its 2 subunits. Detects stalled/collided 70S ribosomes which it binds and splits by an ATP-hydrolysis driven conformational change. Acts upstream of the ribosome quality control system (RQC), a ribosome-associated complex that mediates the extraction of incompletely synthesized nascent chains from stalled ribosomes and their subsequent degradation. Probably generates substrates for RQC. The polypeptide is Endonuclease MutS2 (Caldanaerobacter subterraneus subsp. tengcongensis (strain DSM 15242 / JCM 11007 / NBRC 100824 / MB4) (Thermoanaerobacter tengcongensis)).